A 504-amino-acid polypeptide reads, in one-letter code: Glycerol kinase (504 aa).

Threonine 13 is an ADP binding site. ATP-binding residues include threonine 13, threonine 14, and serine 15. Residue threonine 13 participates in sn-glycerol 3-phosphate binding. Arginine 17 serves as a coordination point for ADP. Residues arginine 83, glutamate 84, and tyrosine 135 each contribute to the sn-glycerol 3-phosphate site. Glycerol-binding residues include arginine 83, glutamate 84, and tyrosine 135. Histidine 231 bears the Phosphohistidine; by HPr mark. Aspartate 245 contributes to the sn-glycerol 3-phosphate binding site. Aspartate 245 and glutamine 246 together coordinate glycerol. Residues threonine 267 and glycine 310 each contribute to the ADP site. Threonine 267, glycine 310, glutamine 314, and glycine 411 together coordinate ATP. Glycine 411 and asparagine 415 together coordinate ADP.

Belongs to the FGGY kinase family. As to quaternary structure, homotetramer and homodimer (in equilibrium). Post-translationally, the phosphoenolpyruvate-dependent sugar phosphotransferase system (PTS), including enzyme I, and histidine-containing protein (HPr) are required for the phosphorylation, which leads to the activation of the enzyme.

It carries out the reaction glycerol + ATP = sn-glycerol 3-phosphate + ADP + H(+). It participates in polyol metabolism; glycerol degradation via glycerol kinase pathway; sn-glycerol 3-phosphate from glycerol: step 1/1. Its activity is regulated as follows. Activated by phosphorylation and inhibited by fructose 1,6-bisphosphate (FBP). Key enzyme in the regulation of glycerol uptake and metabolism. Catalyzes the phosphorylation of glycerol to yield sn-glycerol 3-phosphate. The polypeptide is Glycerol kinase (Ligilactobacillus salivarius (strain UCC118) (Lactobacillus salivarius)).